A 288-amino-acid chain; its full sequence is dTDP-4-keto-6-deoxy-D-glucose reductase (288 aa).

NADH contacts are provided by residues Gly12 to Leu14, Asp38 to Ile39, Ala62 to Thr64, Tyr127, and Lys131. Residues Met13–Leu14, Asp38–Ile39, Ala62–Thr64, Tyr127, and Lys131 contribute to the NADPH site. The Proton donor/acceptor role is filled by Tyr127.

The protein belongs to the dTDP-4-dehydrorhamnose reductase family. Mg(2+) serves as cofactor.

It functions in the pathway antibiotic biosynthesis; novobiocin biosynthesis. Its function is as follows. Reduces the product formed from the reaction of NovW with dTDP-4-keto-6-deoxy-D-glucose to result in dTDP-5-methyl-L-rhamnose in the novobiocin biosynthesis pathway, an aminocoumarin family antibiotic that targets bacterial DNA gyrases. The protein is dTDP-4-keto-6-deoxy-D-glucose reductase (novS) of Streptomyces niveus (Streptomyces spheroides).